The following is a 313-amino-acid chain: Platelet glycoprotein VI (313 aa).

The N-terminal stretch at 1–21 (MSPASPTFFCIGLCVLQVIQT) is a signal peptide. Over 22-265 (QSGPLPKPSL…FGFAHQHYAK (244 aa)) the chain is Extracellular. Ig-like C2-type domains follow at residues 27–105 (PKPS…DQLE) and 115–197 (PSLS…APSD). Residues cysteine 49 and cysteine 89 are joined by a disulfide bond. The N-linked (GlcNAc...) asparagine glycan is linked to asparagine 93. Cysteine 135 and cysteine 181 are oxidised to a cystine. The interval 213 to 236 (VPTEESFPVTESSRRPSILPTNKI) is disordered. Asparagine 244 is a glycosylation site (N-linked (GlcNAc...) asparagine). A helical membrane pass occupies residues 266-286 (GNLVRICLGATIIIILLGLLA). At 287–313 (EDWHSRKKCLQHRMRALQRPLPPLPLA) the chain is on the cytoplasmic side.

In terms of assembly, associated with Fc receptor gamma chain. The GPVI:FcRgamma complex is associated with the Src kinase family FYN and LYN. Interacts with TRAF4. Interacts with COL1A1, but not with COL4A4. Megakaryocytes and platelets.

The protein resides in the cell membrane. Collagen receptor involved in collagen-induced platelet adhesion and activation. Plays a key role in platelet procoagulant activity and subsequent thrombin and fibrin formation. This procoagulant function may contribute to arterial and venous thrombus formation. The signaling pathway involves the FcR gamma-chain, the Src kinases (likely FYN or LYN) and SYK, the adapter protein LAT and leads to the activation of PLCG2. In Mus musculus (Mouse), this protein is Platelet glycoprotein VI.